Here is a 734-residue protein sequence, read N- to C-terminus: Photosystem I P700 chlorophyll a apoprotein A2 (734 aa).

The next 8 membrane-spanning stretches (helical) occupy residues 46 to 69 (IFAS…FHVA), 135 to 158 (LYTG…LHLQ), 175 to 199 (LNHH…HVAI), 273 to 291 (MAHH…GHMY), 330 to 353 (IHFQ…QHMY), 369 to 395 (AALY…IFFI), 417 to 439 (AIIS…LYVH), and 517 to 535 (FLVH…LILV). [4Fe-4S] cluster-binding residues include C559 and C568. Transmembrane regions (helical) follow at residues 575 to 596 (AFYL…YWHW) and 643 to 665 (LSVW…MFLI). The chlorophyll a site is built by H654, M662, and Y670. W671 is a phylloquinone binding site. A helical transmembrane segment spans residues 707 to 727 (LVGLAHFSVGYIFTYAAFLIA).

It belongs to the PsaA/PsaB family. As to quaternary structure, the PsaA/B heterodimer binds the P700 chlorophyll special pair and subsequent electron acceptors. PSI consists of a core antenna complex that captures photons, and an electron transfer chain that converts photonic excitation into a charge separation. The eukaryotic PSI reaction center is composed of at least 11 subunits. P700 is a chlorophyll a/chlorophyll a' dimer, A0 is one or more chlorophyll a, A1 is one or both phylloquinones and FX is a shared 4Fe-4S iron-sulfur center. serves as cofactor.

Its subcellular location is the plastid. The protein localises to the chloroplast thylakoid membrane. It catalyses the reaction reduced [plastocyanin] + hnu + oxidized [2Fe-2S]-[ferredoxin] = oxidized [plastocyanin] + reduced [2Fe-2S]-[ferredoxin]. Its function is as follows. PsaA and PsaB bind P700, the primary electron donor of photosystem I (PSI), as well as the electron acceptors A0, A1 and FX. PSI is a plastocyanin-ferredoxin oxidoreductase, converting photonic excitation into a charge separation, which transfers an electron from the donor P700 chlorophyll pair to the spectroscopically characterized acceptors A0, A1, FX, FA and FB in turn. Oxidized P700 is reduced on the lumenal side of the thylakoid membrane by plastocyanin. The chain is Photosystem I P700 chlorophyll a apoprotein A2 from Triticum aestivum (Wheat).